The sequence spans 216 residues: Imidazole glycerol phosphate synthase subunit HisH (216 aa).

The Glutamine amidotransferase type-1 domain occupies Arg-2–Pro-216. The active-site Nucleophile is the Cys-88. Residues His-196 and Glu-198 contribute to the active site.

As to quaternary structure, heterodimer of HisH and HisF.

It localises to the cytoplasm. It catalyses the reaction 5-[(5-phospho-1-deoxy-D-ribulos-1-ylimino)methylamino]-1-(5-phospho-beta-D-ribosyl)imidazole-4-carboxamide + L-glutamine = D-erythro-1-(imidazol-4-yl)glycerol 3-phosphate + 5-amino-1-(5-phospho-beta-D-ribosyl)imidazole-4-carboxamide + L-glutamate + H(+). The enzyme catalyses L-glutamine + H2O = L-glutamate + NH4(+). The protein operates within amino-acid biosynthesis; L-histidine biosynthesis; L-histidine from 5-phospho-alpha-D-ribose 1-diphosphate: step 5/9. IGPS catalyzes the conversion of PRFAR and glutamine to IGP, AICAR and glutamate. The HisH subunit catalyzes the hydrolysis of glutamine to glutamate and ammonia as part of the synthesis of IGP and AICAR. The resulting ammonia molecule is channeled to the active site of HisF. The protein is Imidazole glycerol phosphate synthase subunit HisH of Brucella melitensis biotype 1 (strain ATCC 23456 / CCUG 17765 / NCTC 10094 / 16M).